Consider the following 390-residue polypeptide: UPF0229 protein OB2647 (390 aa).

The disordered stretch occupies residues 99–121 (NASQQGQQGQGNGKKAGDQPGTD).

Belongs to the UPF0229 family.

This chain is UPF0229 protein OB2647, found in Oceanobacillus iheyensis (strain DSM 14371 / CIP 107618 / JCM 11309 / KCTC 3954 / HTE831).